The sequence spans 217 residues: MITSQMVKELRERTGAGMMDCKRALEEANGDMEKAIEILRQKGLAAAAKKAGRIATEGVVEAYIHGGGRIGVLVEINCETDFVAKTDEFKSFARDIAMQIAAAKPEYVRREDVPQEVIEKEREILRAQALNEGKPANVVEKMVEGRLEKFFKEVCLLEQPFIKNPDITVKDLLTEKIAKIGENINIRRFVRFELGEGLAKKEEDFAAEVAAAMKVNK.

Positions 80 to 83 (TDFV) are involved in Mg(2+) ion dislocation from EF-Tu.

The protein belongs to the EF-Ts family.

Its subcellular location is the cytoplasm. Associates with the EF-Tu.GDP complex and induces the exchange of GDP to GTP. It remains bound to the aminoacyl-tRNA.EF-Tu.GTP complex up to the GTP hydrolysis stage on the ribosome. The sequence is that of Elongation factor Ts from Carboxydothermus hydrogenoformans (strain ATCC BAA-161 / DSM 6008 / Z-2901).